The chain runs to 670 residues: Lebercilin-like protein (670 aa).

The segment at 30–51 (KRSPGTGDFSRNSNASNKSVDY) is disordered. The segment covering 38–51 (FSRNSNASNKSVDY) has biased composition (polar residues). Coiled-coil stretches lie at residues 148–259 (LHKI…EREE) and 305–336 (AAQT…IKNI). The disordered stretch occupies residues 374-393 (HQGTQKSDVPPLTTKGKKAT). Residues 420–440 (EDSKRKYEDLSGEEKHLEVQI) are a coiled coil. Disordered regions lie at residues 495 to 516 (RSMQ…YTKG), 557 to 580 (KHLS…SFGK), and 609 to 670 (LKTD…KIII). 2 stretches are compositionally biased toward basic and acidic residues: residues 560–572 (SNRE…HSDS) and 621–632 (GSEEPLQSKESH). Residues 651-662 (TVVNSIKPSSPT) are compositionally biased toward polar residues.

It belongs to the LCA5 family.

The chain is Lebercilin-like protein (LCA5L) from Homo sapiens (Human).